A 951-amino-acid chain; its full sequence is MADLSLLQEDLPEDADGLGVDDYSSESDVIIIPSALDFVSQDEMLTPLGRLDKYAASENVFNRQMVARSLLDTLREVCGEERDCIAVLERISRLADDSEPTVRAELMEQVPHIALFCQENRPSIPYAFSKYLLPIVVRYLADQNNQVRKTSQAALLALLEQELIERLDVETKVCPVLIDLTAPDSNDDVKTEAVAIMCKMAPMVGKDITERLILPRFCEMCCDCRMFHVRKVCAANFGDICSVVGQQATEEMLLPRFFQLCSDNVWGVRKACAECFMAVSCATCQEIRRTKLSALFINLISDPSRWVRQAAFQSLGPFISTFANPSSSGQCFKDESKSSEDKDRIRDDGVVQEEQSRPEDAPSDLSAPHSSARLDGTLEGCAAETPGDSAGDMRVPADSSLLCTLSSESPQEAASDAESGKKHDNNSKSASRPDVGTSSPEPTPLDQEMFNSFHFWRTPLPQIDLDKELQQDPGERPSPERTGDAPAAPVPGSPSITMATRKELEEMIENLEPHMDDPDVKAQVEVLSAALRASTLDAHDEAGGAEQRSELQDDAVGAGGELPNCSISEDTSEPLVIAAEENMEATPDYIHGGADVGPGGGGGFSPDEERRPKVQDVVPQALLDQYLSMTDPSRAQTVDTEIAKHCAYSLPGVALTLGRQNWHCLRETYETLASDMQWKVRRTLAFSIHELAVILGDQLTAADLVPIFNGFLKDLDEVRIGVLKHLHDFLKLLHIDKRREYLYQLQEFLVTDNSRNWRFRAELAEQLILLLELYSPRDVYDYLRPIALNLCADKVSSVRWISYKLVSEMVKKLHMATPPTFGVELINELVENFGRCPKWSGRQAFVFVCQTVIEDDCLPMDQFAVHLMPHLLTLANDRVPNVRVLLAKTLRQTLLEKEYFLASASCHQEAVEQTIMALQMDRDSDVKYFASIHPSSTKLSEDAMSTASSTY.

HEAT repeat units lie at residues glutamate 26–arginine 63, arginine 82–glutamate 119, alanine 127–isoleucine 164, aspartate 168–lysine 206, isoleucine 208–glutamine 246, alanine 248–glutamine 285, and isoleucine 287–asparagine 324. Disordered regions lie at residues serine 326–valine 395, serine 407–arginine 501, histidine 539–glutamate 569, and glycine 592–proline 612. 3 stretches are compositionally biased toward basic and acidic residues: residues phenylalanine 332–aspartate 360, aspartate 464–glycine 483, and histidine 539–leucine 551. The stretch at lysine 502–histidine 539 is one HEAT 8 repeat. A compositionally biased stretch (gly residues) spans alanine 594–phenylalanine 604. HEAT repeat units lie at residues leucine 699 to isoleucine 735, arginine 777 to methionine 815, threonine 820 to leucine 858, and glutamine 862 to tyrosine 899. A Phosphoserine modification is found at serine 936.

As to quaternary structure, serine/threonine-protein phosphatase 4 (PP4) occurs in different assemblies of the catalytic and one or more regulatory subunits. Component of the PP4 complex PPP4C-PPP4R1. Interacts with HDAC3.

Regulatory subunit of serine/threonine-protein phosphatase 4. May play a role in regulation of cell division in renal glomeruli. The PPP4C-PPP4R1 PP4 complex may play a role in dephosphorylation and regulation of HDAC3. Plays a role in the inhibition of TNF-induced NF-kappa-B activation by regulating the dephosphorylation of TRAF2. The polypeptide is Serine/threonine-protein phosphatase 4 regulatory subunit 1 (Ppp4r1) (Rattus norvegicus (Rat)).